We begin with the raw amino-acid sequence, 546 residues long: Peptidoglycan transport ATP-binding protein YejF (546 aa).

2 consecutive ABC transporter domains span residues 12–261 (VRDL…RHLL) and 291–530 (IKAG…KALL). ATP contacts are provided by residues 46-53 (GESGSGKS) and 323-330 (GESGSGKT).

The protein belongs to the ABC transporter superfamily. As to quaternary structure, the complex is composed of one ATP-binding protein (YejF), two transmembrane proteins (YejB and YejE) and a solute-binding protein (YepA or YejA).

It is found in the cell inner membrane. In terms of biological role, part of the ABC transporter complex YejBEF-YepA involved in the uptake of muropeptides, the breakdown products of cell wall peptidoglycan. The import of muropeptides into the cell enables peptidoglycan recycling, which is vital for cell wall integrity in this bacterium. Is also probably part of the ABC transporter complex YejABEF, which is likely involved in broad-spectrum peptide import. Responsible for energy coupling to the transport system. This is Peptidoglycan transport ATP-binding protein YejF from Agrobacterium fabrum (strain C58 / ATCC 33970) (Agrobacterium tumefaciens (strain C58)).